We begin with the raw amino-acid sequence, 541 residues long: 2-succinyl-5-enolpyruvyl-6-hydroxy-3-cyclohexene-1-carboxylate synthase (541 aa).

This sequence belongs to the TPP enzyme family. MenD subfamily. Homodimer. The cofactor is Mg(2+). It depends on Mn(2+) as a cofactor. Thiamine diphosphate is required as a cofactor.

It catalyses the reaction isochorismate + 2-oxoglutarate + H(+) = 5-enolpyruvoyl-6-hydroxy-2-succinyl-cyclohex-3-ene-1-carboxylate + CO2. It functions in the pathway quinol/quinone metabolism; 1,4-dihydroxy-2-naphthoate biosynthesis; 1,4-dihydroxy-2-naphthoate from chorismate: step 2/7. The protein operates within quinol/quinone metabolism; menaquinone biosynthesis. In terms of biological role, catalyzes the thiamine diphosphate-dependent decarboxylation of 2-oxoglutarate and the subsequent addition of the resulting succinic semialdehyde-thiamine pyrophosphate anion to isochorismate to yield 2-succinyl-5-enolpyruvyl-6-hydroxy-3-cyclohexene-1-carboxylate (SEPHCHC). The chain is 2-succinyl-5-enolpyruvyl-6-hydroxy-3-cyclohexene-1-carboxylate synthase from Leuconostoc mesenteroides subsp. mesenteroides (strain ATCC 8293 / DSM 20343 / BCRC 11652 / CCM 1803 / JCM 6124 / NCDO 523 / NBRC 100496 / NCIMB 8023 / NCTC 12954 / NRRL B-1118 / 37Y).